Reading from the N-terminus, the 58-residue chain is Potassium channel toxin alpha-KTx BmKcug1a (58 aa).

The signal sequence occupies residues methionine 1–alanine 21. Glutamine 22 is subject to Pyrrolidone carboxylic acid. Disulfide bonds link cysteine 28/cysteine 49, cysteine 34/cysteine 54, and cysteine 38/cysteine 56.

Belongs to the short scorpion toxin superfamily. Potassium channel inhibitor family. Alpha-KTx 01 subfamily. As to expression, expressed by the venom gland.

Its subcellular location is the secreted. Potent blocker of both large-conductance calcium-activated potassium channels (KCa1.1/KCNMA1) and voltage-gated potassium channels (Kv1.3/KCNA3 and ERG1/Kv11.1/KCNH2). The polypeptide is Potassium channel toxin alpha-KTx BmKcug1a (Olivierus martensii (Manchurian scorpion)).